Reading from the N-terminus, the 324-residue chain is tRNA N6-adenosine threonylcarbamoyltransferase (324 aa).

Residues His107, His111, and Tyr127 each coordinate Fe cation. Residues 127 to 131, Asp159, Gly172, Glu176, and Asn257 each bind substrate; that span reads YVSGG. Position 285 (Asp285) interacts with Fe cation.

Belongs to the KAE1 / TsaD family. As to quaternary structure, monomer. Component of the KEOPS complex that consists of Kae1, Bud32, Cgi121 and Pcc1; the whole complex dimerizes. The cofactor is Fe(2+).

The protein localises to the cytoplasm. The catalysed reaction is L-threonylcarbamoyladenylate + adenosine(37) in tRNA = N(6)-L-threonylcarbamoyladenosine(37) in tRNA + AMP + H(+). In terms of biological role, required for the formation of a threonylcarbamoyl group on adenosine at position 37 (t(6)A37) in tRNAs that read codons beginning with adenine. Is a component of the KEOPS complex that is probably involved in the transfer of the threonylcarbamoyl moiety of threonylcarbamoyl-AMP (TC-AMP) to the N6 group of A37. Kae1 likely plays a direct catalytic role in this reaction, but requires other protein(s) of the complex to fulfill this activity. This chain is tRNA N6-adenosine threonylcarbamoyltransferase, found in Pyrococcus horikoshii (strain ATCC 700860 / DSM 12428 / JCM 9974 / NBRC 100139 / OT-3).